The chain runs to 825 residues: Glycerol-3-phosphate acyltransferase 1, mitochondrial (825 aa).

Topologically, residues 1-87 (MDESALTLGT…FFNPSIPSLG (87 aa)) are cytoplasmic. The important for mitochondrial localization stretch occupies residues 80-120 (NPSIPSLGLRNVIYINETHTRHRGWLARRLSYVLFIQERDV). Residues 88–118 (LRNVIYINETHTRHRGWLARRLSYVLFIQER) lie within the membrane without spanning it. The Cytoplasmic segment spans residues 119–825 (DVHKGMFATN…LEYILSLVVL (707 aa)). An HXXXXD motif motif is present at residues 230-235 (HRSHID). 5 residues coordinate CoA: arginine 278, arginine 279, lysine 288, arginine 293, and arginine 328. Position 380 is a phosphoserine (serine 380). Positions 435–455 (SRPSGAADEGTDMSINESRNA) are disordered. Arginine 461 is a binding site for CoA. Residues serine 685 and serine 692 each carry the phosphoserine modification. 2 positions are modified to N6-acetyllysine: lysine 777 and lysine 781.

Belongs to the GPAT/DAPAT family. As to expression, highly expressed in adipose tissues and lung. Low expression in liver.

It is found in the mitochondrion outer membrane. The enzyme catalyses sn-glycerol 3-phosphate + an acyl-CoA = a 1-acyl-sn-glycero-3-phosphate + CoA. It catalyses the reaction (9Z,12Z)-octadecadienoyl-CoA + sn-glycerol 3-phosphate = 1-(9Z,12Z)-octadecadienoyl-sn-glycero-3-phosphate + CoA. The catalysed reaction is sn-glycerol 3-phosphate + (9Z)-octadecenoyl-CoA = 1-(9Z-octadecenoyl)-sn-glycero-3-phosphate + CoA. It carries out the reaction sn-glycerol 3-phosphate + octadecanoyl-CoA = 1-octadecanoyl-sn-glycero-3-phosphate + CoA. The enzyme catalyses sn-glycerol 3-phosphate + hexadecanoyl-CoA = 1-hexadecanoyl-sn-glycero-3-phosphate + CoA. It catalyses the reaction dodecanoyl-CoA + sn-glycerol 3-phosphate = 1-dodecanoyl-sn-glycerol 3-phosphate + CoA. The catalysed reaction is 1-acyl-sn-glycero-3-phospho-(1'-sn-glycerol) + an acyl-CoA = a 1,2-diacyl-sn-glycero-3-phospho-(1'-sn-glycerol) + CoA. It functions in the pathway phospholipid metabolism; CDP-diacylglycerol biosynthesis; CDP-diacylglycerol from sn-glycerol 3-phosphate: step 1/3. In terms of biological role, mitochondrial membrane protein that catalyzes the essential first step of biosynthesis of glycerolipids such as triglycerides, phosphatidic acids and lysophosphatidic acids. Esterifies acyl-group from acyl-coenzyme A (acyl-CoA) to the sn-1 position of glycerol-3-phosphate, to produce lysophosphatidic acid. Has a narrow hydrophobic binding cleft that selects for a linear acyl chain. Catalytic activity is higher for substrates with a 16-carbon acyl chain. The chain is Glycerol-3-phosphate acyltransferase 1, mitochondrial from Bos taurus (Bovine).